The sequence spans 617 residues: Protein fem-1 homolog C (617 aa).

7 ANK repeats span residues 2–31, 40–70, 82–111, 115–144, 148–177, 181–210, and 213–242; these read DLKTAVFNAARDGKLRLLSKLLENKAKDDV, NGATPLLMAARYGHLDMVDYLLDQCSASVEI, EGAPPLWAASAAGHLKVVRSLLVHGASVNN, TNSTPLRAACFDGHLEIVKYLVEHKADLEV, HGHTCLMISCYKGHKEIAQFLLEKGADVNR, KGNTALHDCAESGSLEIMQMLLKYGARMEK, and YGMTPLLSASVTGHTNIVDFLTQNPQTSKN. TPR repeat units follow at residues 245 to 279 and 338 to 371; these read INALELLGATFVDKKRDLLGALKYWKRAMDMRHSD and SYYIRYRGAVYADSGNFKRCINLWKYALDMQQNN. ANK repeat units lie at residues 481–523 and 527–556; these read NNFS…DVNV and EQNSPLHVAALNNHPDIMNLLVKSGAHFDS.

This sequence belongs to the fem-1 family. Component of a CRL2 E3 ubiquitin-protein ligase complex, also named ECS (Elongin BC-CUL2/5-SOCS-box protein) complex.

The protein operates within protein modification; protein ubiquitination. Its function is as follows. Substrate-recognition component of a Cul2-RING (CRL2) E3 ubiquitin-protein ligase complex of the DesCEND (destruction via C-end degrons) pathway, which recognizes a C-degron located at the extreme C terminus of target proteins, leading to their ubiquitination and degradation. The C-degron recognized by the DesCEND pathway is usually a motif of less than ten residues and can be present in full-length proteins, truncated proteins or proteolytically cleaved forms. The CRL2(FEM1C) complex specifically recognizes proteins with an arginine at the C-terminus: recognizes and binds proteins ending with -Lys/Arg-Xaa-Arg and -Lys/Arg-Xaa-Xaa-Arg C-degrons, leading to their ubiquitination and degradation. The chain is Protein fem-1 homolog C from Xenopus laevis (African clawed frog).